The sequence spans 628 residues: MSLAVRPPVCLLCRSGAPTLLPSSVSQVARSMATARLRRKVARMALSPDVAKSSINQKRSGKAKFGPWSGMNQTEAHIRGEPRSRSQAALRRSGEKAADTPRKSDSPLYKALKMQTTLAPVPYGRRTAVKSKIADITSFDHFPLLPVVRHSIFSQALPGLVDVTPTPIQRLAIPKLMEDSPDGKRGTKLEDGDPQYDQYLLAAETGSGKTLAYLLPLVDAVKRLEVEDKENERKEEERKAKEKEERLKNRAFDLEPEEPPLSNAGRPRVIILVPTSELVAQVGVKVKALAHTVKYRSGMISSNLTPRRIKSTLFNPDGIDILVSTPHLLASIAKTEPYVLSRVSHLVLDEADSLMDRSFLPTTTEIISKVAPSLRKLILCSATIPRSLDNLLRKRYPDIKRLTTPNLHAIPRRVQLGVVDIQKEPYRGNRNLACADVIWSIGKAGDSEPSEPFASYVGPNIKKILVFVNEREEADEVAQFLRSKGIDAQSLSRDSSARKQEEILAEFTESAPPPSPEEIMLAQKKRRQEDAIPFELPENHNKPENVRRLANTKVLVTTDLASRGIDTLPVKTVILYHVPHTTIDFIHRLGRLGRMNKRGRGIVLVGKKDRKDVVKEVREGMFRGQALI.

Residues 1-40 constitute a mitochondrion transit peptide; the sequence is MSLAVRPPVCLLCRSGAPTLLPSSVSQVARSMATARLRRK. Positions 51-109 are disordered; the sequence is AKSSINQKRSGKAKFGPWSGMNQTEAHIRGEPRSRSQAALRRSGEKAADTPRKSDSPLY. The segment covering 92–105 has biased composition (basic and acidic residues); sequence RSGEKAADTPRKSD. Residues 137–170 carry the Q motif motif; the sequence is TSFDHFPLLPVVRHSIFSQALPGLVDVTPTPIQR. One can recognise a Helicase ATP-binding domain in the interval 190 to 402; the sequence is EDGDPQYDQY…RKRYPDIKRL (213 aa). 203 to 210 contributes to the ATP binding site; the sequence is AETGSGKT. A compositionally biased stretch (basic and acidic residues) spans 228–253; sequence DKENERKEEERKAKEKEERLKNRAFD. The disordered stretch occupies residues 228–260; sequence DKENERKEEERKAKEKEERLKNRAFDLEPEEPP. The DEAD box signature appears at 349–352; sequence DEAD. Positions 456–628 constitute a Helicase C-terminal domain; the sequence is YVGPNIKKIL…EGMFRGQALI (173 aa).

Belongs to the DEAD box helicase family. MRH4 subfamily.

The protein resides in the mitochondrion. It carries out the reaction ATP + H2O = ADP + phosphate + H(+). In terms of biological role, ATP-binding RNA helicase involved in mitochondrial RNA metabolism. Required for maintenance of mitochondrial DNA. The protein is ATP-dependent RNA helicase mrh4, mitochondrial (mrh4) of Aspergillus oryzae (strain ATCC 42149 / RIB 40) (Yellow koji mold).